The following is a 256-amino-acid chain: Putative ankyrin repeat protein FPV231 (256 aa).

ANK repeat units lie at residues 1–20, 24–53, 57–86, 90–119, and 123–151; these read MFGNTTISKMLLDYGARIDS, EECLPLNHAIATNNKELTSLFLARGADTNI, YNRSVLHKAIGNNNITSVKLLLNHGIDYNL, HGYTALHYAITLQNREITDMLLSSGADPNI, and EKHTPLYHALLYRSSNVESLILHGADINI.

In Vertebrata (FPV), this protein is Putative ankyrin repeat protein FPV231.